The primary structure comprises 586 residues: Glutathione S-transferase C-terminal domain-containing protein homolog (586 aa).

The GST C-terminal domain occupies 121–276; it reads LGFKESCLLA…GTCAKILGDL (156 aa).

The protein belongs to the GSTCD family.

This Drosophila pseudoobscura pseudoobscura (Fruit fly) protein is Glutathione S-transferase C-terminal domain-containing protein homolog.